Here is a 490-residue protein sequence, read N- to C-terminus: Keratin, type II cytoskeletal 8 (490 aa).

Polar residues predominate over residues 1–27 (MSIRVTQKSYKMSTSGPRAFSSRSFTS). The tract at residues 1 to 48 (MSIRVTQKSYKMSTSGPRAFSSRSFTSGPGARISSSSFSRVGSSSSSF) is disordered. Residues 1-96 (MSIRVTQKSY…DPNIQAVRTQ (96 aa)) are head. Residue Ser9 is modified to Phosphoserine; by PKC/PRKCE. Residue Lys11 forms a Glycyl lysine isopeptide (Lys-Gly) (interchain with G-Cter in SUMO2) linkage. Ser13, Ser15, Ser21, and Ser22 each carry phosphoserine. An Omega-N-methylarginine modification is found at Arg23. Ser24 is subject to Phosphoserine; by PKC/PRKCE. Thr26 is modified (phosphothreonine). At Ser27 the chain carries Phosphoserine. Arg32 bears the Omega-N-methylarginine mark. Residues Ser34, Ser37, and Ser39 each carry the phosphoserine modification. Positions 34 to 48 (SSSSFSRVGSSSSSF) are enriched in low complexity. An Omega-N-methylarginine modification is found at Arg40. A phosphoserine mark is found at Ser43, Ser44, and Ser47. Residue Arg49 is modified to Asymmetric dimethylarginine; alternate. The residue at position 49 (Arg49) is an Omega-N-methylarginine; alternate. Phosphoserine is present on Ser51. Phosphoserine; by MAPK is present on Ser80. Positions 97–132 (EKEQIKSLNNKFASFIDKVRFLEQQNKMLETKWSLL) are coil 1A. Residues 97 to 408 (EKEQIKSLNN…KLLEGEESRL (312 aa)) enclose the IF rod domain. Lys107 is modified (N6-malonyllysine). Glycyl lysine isopeptide (Lys-Gly) (interchain with G-Cter in SUMO2) cross-links involve residues Lys128 and Lys136. The tract at residues 133-149 (QQQKTSRSNMDNMFESY) is linker 1. The tract at residues 150–241 (INNLRRQLEA…QIHEEEIREL (92 aa)) is coil 1B. Residue Lys203 forms a Glycyl lysine isopeptide (Lys-Gly) (interchain with G-Cter in SUMO1); alternate linkage. Residue Lys203 forms a Glycyl lysine isopeptide (Lys-Gly) (interchain with G-Cter in SUMO2); alternate linkage. An N6-acetyllysine modification is found at Lys213. The interval 242–265 (QSQISDTSVVLSMDNSRSLDMDGI) is linker 12. A phosphoserine mark is found at Ser259 and Ser280. The coil 2 stretch occupies residues 266–403 (IAEVRAQYED…ITTYRKLLEG (138 aa)). Residues 267–387 (AEVRAQYEDI…REYQELMNVK (121 aa)) are necessary for interaction with PNN. Lys291 participates in a covalent cross-link: Glycyl lysine isopeptide (Lys-Gly) (interchain with G-Cter in SUMO2). Lys301 participates in a covalent cross-link: Glycyl lysine isopeptide (Lys-Gly) (interchain with G-Cter in SUMO2); alternate. At Lys301 the chain carries N6-acetyllysine; alternate. Lys310 participates in a covalent cross-link: Glycyl lysine isopeptide (Lys-Gly) (interchain with G-Cter in SUMO2). Lys331 participates in a covalent cross-link: Glycyl lysine isopeptide (Lys-Gly) (interchain with G-Cter in SUMO2); alternate. Position 331 is an N6-acetyllysine; alternate (Lys331). Ser336 bears the Phosphoserine mark. A Glycyl lysine isopeptide (Lys-Gly) (interchain with G-Cter in SUMO2) cross-link involves residue Lys399. The tract at residues 404-490 (EESRLESGMQ…VSESSDVVSK (87 aa)) is tail. Phosphoserine occurs at positions 406, 410, 416, 423, 430, 432, and 438. Lys479 participates in a covalent cross-link: Glycyl lysine isopeptide (Lys-Gly) (interchain with G-Cter in SUMO1); alternate. Residue Lys479 forms a Glycyl lysine isopeptide (Lys-Gly) (interchain with G-Cter in SUMO2); alternate linkage. 4 positions are modified to phosphoserine: Ser482, Ser484, Ser485, and Ser489.

This sequence belongs to the intermediate filament family. In terms of assembly, heterotetramer of two type I and two type II keratins. Forms a heterodimer with KRT18. Associates with KRT20. Interacts with PLEC isoform 1C, when in a heterodimer with KRT18. Interacts with PNN. When associated with KRT19, interacts with DMD. Interacts with TCHP. Interacts with APEX1. Interacts with GPER1. Interacts with EPPK1. Interacts with PKP1 and PKP2. In terms of processing, phosphorylation on serine residues is enhanced during EGF stimulation and mitosis. Ser-80 phosphorylation plays an important role in keratin filament reorganization. Post-translationally, O-glycosylated. O-GlcNAcylation at multiple sites increases solubility, and decreases stability by inducing proteasomal degradation. O-glycosylated (O-GlcNAcylated), in a cell cycle-dependent manner. Expressed in abundance in the epithelia of colon, bladder, ileum, and stomach, with lower expression observed in earskin (at protein level). Also expressed in pancreas, liver, dudenum and jejunum.

The protein resides in the cytoplasm. The protein localises to the nucleus. Its subcellular location is the nucleoplasm. It is found in the nucleus matrix. Its function is as follows. Together with KRT19, helps to link the contractile apparatus to dystrophin at the costameres of striated muscle. This chain is Keratin, type II cytoskeletal 8 (Krt8), found in Mus musculus (Mouse).